The chain runs to 465 residues: MAQSFRIENDSMGTIKVPDQALWGAQTQRSLINFAIGHNKMPMKLIYSIVQIKASAAIVNCRLGVLDKQRKNFILNACNEISNGMHDEQFPLSVWQTGSGTQTNMNVNEVISNIASHLNGNKLGSHEPLHPNDHVNRSQSTNDVFPAAIQIATVQEILENLLPELDQLIETFDKKIIKWNRIIKTGRTHLQDAVPLTLGQEASAWKEQLIASRNRLNKSLNELYPLPLGGTAIGTGLNAPAKFDKEIALEIAKSTRSPFVSAQNKFAIMASHDALVHTMSQLKLLAVSLFKIVNDLRLLSCGPRGGLGELRLPENEPGSSIMPGKVNPTQCEAMAMVCTQIMALDSAVTMAGSGGHLQMNSYKPLIAFNLLESIDLLSSACKSSRILMIEGIEPNLEKIQNSLQNSLMLITSLTPIIGYEKASKIAQCAHEKDITLKEATKLLGYLNEDDFDRIVNPQSMTGMEN.

Substrate is bound by residues 99–101 (SGT), 130–133 (HPND), 140–142 (STN), and threonine 188. The active-site Proton donor/acceptor is histidine 189. The active site involves serine 319. Residues serine 320 and 325–327 (KVN) each bind substrate.

Belongs to the class-II fumarase/aspartase family. Fumarase subfamily. As to quaternary structure, homotetramer.

The protein resides in the cytoplasm. It catalyses the reaction (S)-malate = fumarate + H2O. It participates in carbohydrate metabolism; tricarboxylic acid cycle; (S)-malate from fumarate: step 1/1. Involved in the TCA cycle. Catalyzes the stereospecific interconversion of fumarate to L-malate. This Prochlorococcus marinus (strain SARG / CCMP1375 / SS120) protein is Fumarate hydratase class II.